A 306-amino-acid chain; its full sequence is LysM and putative peptidoglycan-binding domain-containing protein 3 (306 aa).

The Extracellular portion of the chain corresponds to 1 to 217 (MAGRHQNRSF…PYYGADWGIG (217 aa)). An N-linked (GlcNAc...) asparagine glycan is attached at Asn-7. Ser-55 is modified (phosphoserine). The LysM domain occupies 65-109 (LTKDIQEGDTLNAIALQYCCTVADIKRVNNLISDQDFFALRSIKI). Residues 218 to 238 (WWTAVVIMLIVGIITPVFYLL) traverse the membrane as a helical segment. The Cytoplasmic segment spans residues 239–306 (YYEILAKVDV…SQSPAAQQET (68 aa)).

It is found in the cell membrane. The protein resides in the golgi apparatus. Functionally, essential for Golgi structural integrity. This chain is LysM and putative peptidoglycan-binding domain-containing protein 3 (LYSMD3), found in Homo sapiens (Human).